Consider the following 460-residue polypeptide: 1-aminocyclopropane-1-carboxylate synthase 11 (460 aa).

Substrate-binding residues include Glu-45 and Tyr-83. Lys-267 is modified (N6-(pyridoxal phosphate)lysine).

It belongs to the class-I pyridoxal-phosphate-dependent aminotransferase family. In terms of assembly, homodimer and heterodimer. In vivo, the relevance of heterodimerization with other ACS enzymes is however unsure. Interacts with GRF3. Pyridoxal 5'-phosphate is required as a cofactor. May be processed at its C-terminus. Expressed in roots.

It carries out the reaction S-adenosyl-L-methionine = 1-aminocyclopropane-1-carboxylate + S-methyl-5'-thioadenosine + H(+). It functions in the pathway alkene biosynthesis; ethylene biosynthesis via S-adenosyl-L-methionine; ethylene from S-adenosyl-L-methionine: step 1/2. Its function is as follows. 1-aminocyclopropane-1-carboxylate synthase (ACS) enzymes catalyze the conversion of S-adenosyl-L-methionine (SAM) into 1-aminocyclopropane-1-carboxylate (ACC), a direct precursor of ethylene. This chain is 1-aminocyclopropane-1-carboxylate synthase 11 (ACS11), found in Arabidopsis thaliana (Mouse-ear cress).